Consider the following 458-residue polypeptide: Phosphoglucosamine mutase (458 aa).

Serine 106 acts as the Phosphoserine intermediate in catalysis. 4 residues coordinate Mg(2+): serine 106, aspartate 247, aspartate 249, and aspartate 251. A Phosphoserine modification is found at serine 106.

Belongs to the phosphohexose mutase family. The cofactor is Mg(2+). Activated by phosphorylation.

It carries out the reaction alpha-D-glucosamine 1-phosphate = D-glucosamine 6-phosphate. In terms of biological role, catalyzes the conversion of glucosamine-6-phosphate to glucosamine-1-phosphate. The polypeptide is Phosphoglucosamine mutase (Chlamydia trachomatis serovar A (strain ATCC VR-571B / DSM 19440 / HAR-13)).